The primary structure comprises 142 residues: Cystatin-8 (142 aa).

The signal sequence occupies residues 1–21 (MPRCRWLSLILLTIPLALVAR). Asn27 and Asn39 each carry an N-linked (GlcNAc...) asparagine glycan. A Secondary area of contact motif is present at residues 77–81 (QVTNL). Disulfide bonds link Cys95-Cys105 and Cys119-Cys139.

It belongs to the cystatin family. As to expression, proximal caput region of the epididymis. Lower expression in the testis. Within the testis it is localized to the elongating spermatids, whereas within the epididymis it is exclusively synthesized by the proximal caput epithelium.

The protein resides in the secreted. Performs a specialized role during sperm development and maturation. The chain is Cystatin-8 (CST8) from Homo sapiens (Human).